The sequence spans 142 residues: Deoxyuridine 5'-triphosphate nucleotidohydrolase (142 aa).

Substrate is bound by residues 62–64, Asn-75, and 79–81; these read RSG and TID.

The protein belongs to the dUTPase family. The cofactor is Mg(2+).

The catalysed reaction is dUTP + H2O = dUMP + diphosphate + H(+). It participates in pyrimidine metabolism; dUMP biosynthesis; dUMP from dCTP (dUTP route): step 2/2. Its function is as follows. This enzyme is involved in nucleotide metabolism: it produces dUMP, the immediate precursor of thymidine nucleotides and it decreases the intracellular concentration of dUTP so that uracil cannot be incorporated into DNA. The polypeptide is Deoxyuridine 5'-triphosphate nucleotidohydrolase (Trichodesmium erythraeum (strain IMS101)).